A 503-amino-acid polypeptide reads, in one-letter code: Cytochrome c-552 (503 aa).

The first 16 residues, 1-16 (MKKNTIILVGALIAIA), serve as a signal peptide directing secretion. His102 is a binding site for heme c. The heme site is built by Cys130, Cys133, and Lys134. Cys168, Cys171, His172, Cys210, Cys213, and His214 together coordinate heme c. Ca(2+) is bound by residues Glu216, Tyr217, Lys273, and Gln275. Tyr217 provides a ligand contact to substrate. Substrate is bound at residue His276. His287, Cys294, Cys297, His298, His312, Cys325, Cys328, His329, and His404 together coordinate heme c.

The protein belongs to the cytochrome c-552 family. Ca(2+) serves as cofactor. Requires heme c as cofactor.

The protein localises to the periplasm. The enzyme catalyses 6 Fe(III)-[cytochrome c] + NH4(+) + 2 H2O = 6 Fe(II)-[cytochrome c] + nitrite + 8 H(+). It participates in nitrogen metabolism; nitrate reduction (assimilation). Functionally, catalyzes the reduction of nitrite to ammonia, consuming six electrons in the process. The sequence is that of Cytochrome c-552 from Maridesulfovibrio salexigens (strain ATCC 14822 / DSM 2638 / NCIMB 8403 / VKM B-1763) (Desulfovibrio salexigens).